The chain runs to 383 residues: uncharacterized protein (383 aa).

2 helical membrane-spanning segments follow: residues 49-69 (VDLLAAVQASVEPAALIGCVA) and 347-367 (LLGGIPLAGFFAAGEIGPVAG).

This sequence to M.tuberculosis Rv0874c.

Its subcellular location is the cell membrane. This is an uncharacterized protein from Mycobacterium tuberculosis (strain CDC 1551 / Oshkosh).